Consider the following 616-residue polypeptide: Dihydroxy-acid dehydratase (616 aa).

D81 provides a ligand contact to Mg(2+). Residue C122 participates in [2Fe-2S] cluster binding. Residues D123 and K124 each coordinate Mg(2+). K124 carries the N6-carboxylysine modification. C195 serves as a coordination point for [2Fe-2S] cluster. E491 lines the Mg(2+) pocket. S517 functions as the Proton acceptor in the catalytic mechanism.

Belongs to the IlvD/Edd family. In terms of assembly, homodimer. [2Fe-2S] cluster serves as cofactor. The cofactor is Mg(2+).

The enzyme catalyses (2R)-2,3-dihydroxy-3-methylbutanoate = 3-methyl-2-oxobutanoate + H2O. The catalysed reaction is (2R,3R)-2,3-dihydroxy-3-methylpentanoate = (S)-3-methyl-2-oxopentanoate + H2O. It participates in amino-acid biosynthesis; L-isoleucine biosynthesis; L-isoleucine from 2-oxobutanoate: step 3/4. It functions in the pathway amino-acid biosynthesis; L-valine biosynthesis; L-valine from pyruvate: step 3/4. Functionally, functions in the biosynthesis of branched-chain amino acids. Catalyzes the dehydration of (2R,3R)-2,3-dihydroxy-3-methylpentanoate (2,3-dihydroxy-3-methylvalerate) into 2-oxo-3-methylpentanoate (2-oxo-3-methylvalerate) and of (2R)-2,3-dihydroxy-3-methylbutanoate (2,3-dihydroxyisovalerate) into 2-oxo-3-methylbutanoate (2-oxoisovalerate), the penultimate precursor to L-isoleucine and L-valine, respectively. This chain is Dihydroxy-acid dehydratase, found in Escherichia coli (strain SMS-3-5 / SECEC).